The primary structure comprises 460 residues: Proton extrusion protein PxcA (460 aa).

Disordered stretches follow at residues 82-128 (FSRL…QRRD) and 143-190 (SRYK…GSGN). A compositionally biased stretch (polar residues) spans 90-102 (QNGSGPTSAQDKA). The segment covering 107–120 (AAEANVSESSSENS) has biased composition (low complexity). The span at 151–163 (KSQPISASISTSP) shows a compositional bias: polar residues. The span at 171–184 (QPTSTQPSSSNVSV) shows a compositional bias: low complexity. Helical transmembrane passes span 242–262 (FLLLLAILPLLTQILSKNFLF), 337–357 (GLKNILADLLSLLVFGWLIFV), 373–393 (IYGLSDSAKAFIIILFTDVFV), and 420–440 (FIYGFIATFPVFLDTLFKYWI).

It belongs to the CemA family.

The protein resides in the cell inner membrane. Its function is as follows. Required for H(+) efflux immediately after light irradiation to form a rapid H(+) concentration gradient across the thylakoid membranes. Together with PxcL, contributes to transient H(+) uptake following dark to light transition. The protein is Proton extrusion protein PxcA of Synechococcus sp. (strain JA-2-3B'a(2-13)) (Cyanobacteria bacterium Yellowstone B-Prime).